Reading from the N-terminus, the 243-residue chain is Precursor of CEP9 (243 aa).

Residues 1–26 (MKLLSITLTSIVISMVFYQTPITTEA) form the signal peptide. A propeptide spanning residues 28–44 (SLRKTNDQDHFKAGFTD) is cleaved from the precursor. Disordered regions lie at residues 42 to 63 (FTDDFVPTSPGNSPGVGHKKGN), 91 to 173 (KTGS…VKGF), and 189 to 243 (NGQD…EPKA). The residue at position 48 (P48) is a Hydroxyproline; partial. Residue P51 is modified to Hydroxyproline. A Hydroxyproline; partial modification is found at P55. A propeptide spanning residues 60-96 (KKGNVNVEGFQDDFKPTEGRKLLKTNVQDHFKTGSTD) is cleaved from the precursor. 3 positions are modified to hydroxyproline: P100, P103, and P107. A propeptide spanning residues 112 to 148 (KKGNVNVESSEDDFKHKEGRKLQQTNGQNHFKTGSTD) is cleaved from the precursor. The span at 133-147 (LQQTNGQNHFKTGST) shows a compositional bias: polar residues. A hydroxyproline mark is found at P152, P155, and P159. The propeptide occupies 164–200 (KKGHANVKGFKDDFAPTEEIRLQKMNGQDHFKTGSTD). Hydroxyproline is present on residues P204, P207, and P211. Residues 216–219 (KKGD) constitute a propeptide that is removed on maturation. Residues P223, P226, and P230 each carry the hydroxyproline modification. Residues 235-243 (AVKNDEPKA) constitute a propeptide that is removed on maturation.

It belongs to the C-terminally encoded plant signaling peptide (CEP) family. In terms of assembly, interacts with CEP receptors (e.g. CEPR1 and CEPR2). In terms of processing, hydroxylated peptide is more active than non-hydroxylated peptide. Post-translationally, the mature small signaling peptide is generated by proteolytic processing of the longer precursor. As to expression, expressed in lateral root primordia and in lateral roots excluding the meristem region. Also present in the aerial tissues, such as leaf petioles and the shoot apex region.

The protein resides in the secreted. Its subcellular location is the extracellular space. It is found in the apoplast. In terms of biological role, extracellular signaling peptide that represses primary root growth rate and significantly inhibits lateral root formation. Modulates leaf morphology. Regulates systemic nitrogen (N)-demand signaling. Mediates up-regulation of genes involved in N uptake and assimilation pathways. The chain is Precursor of CEP9 from Arabidopsis thaliana (Mouse-ear cress).